The following is a 187-amino-acid chain: ATP synthase subunit b (187 aa).

The chain crosses the membrane as a helical span at residues 4–24 (LALFALLMVPAILLASGHDSG).

This sequence belongs to the ATPase B chain family. As to quaternary structure, F-type ATPases have 2 components, F(1) - the catalytic core - and F(0) - the membrane proton channel. F(1) has five subunits: alpha(3), beta(3), gamma(1), delta(1), epsilon(1). F(0) has three main subunits: a(1), b(2) and c(10-14). The alpha and beta chains form an alternating ring which encloses part of the gamma chain. F(1) is attached to F(0) by a central stalk formed by the gamma and epsilon chains, while a peripheral stalk is formed by the delta and b chains.

The protein localises to the cell inner membrane. Its function is as follows. F(1)F(0) ATP synthase produces ATP from ADP in the presence of a proton or sodium gradient. F-type ATPases consist of two structural domains, F(1) containing the extramembraneous catalytic core and F(0) containing the membrane proton channel, linked together by a central stalk and a peripheral stalk. During catalysis, ATP synthesis in the catalytic domain of F(1) is coupled via a rotary mechanism of the central stalk subunits to proton translocation. Component of the F(0) channel, it forms part of the peripheral stalk, linking F(1) to F(0). This Sulfurovum sp. (strain NBC37-1) protein is ATP synthase subunit b.